Consider the following 2281-residue polypeptide: Retinal-specific phospholipid-transporting ATPase ABCA4 (2281 aa).

Over M1–R24 the chain is Cytoplasmic. The helical transmembrane segment at F25–V45 threads the bilayer. Topologically, residues N46–S646 are extracellular. Intrachain disulfides connect C54–C81 and C75–C324. An N-linked (GlcNAc...) asparagine glycan is attached at N98. Residues S336 and N338 each contribute to the Mg(2+) site. An intrachain disulfide couples C370 to C519. N-linked (Hex...) asparagine glycosylation is found at N415 and N504. 2 residues coordinate an N-all-trans-retinylidenephosphatidylethanolamine: R587 and R653. Cystine bridges form between C641-C1488, C1442-C1453, and C1486-C1500. A helical membrane pass occupies residues F647–V667. At S668–T699 the chain is on the cytoplasmic side. The chain crosses the membrane as a helical span at residues W700–M720. Residues H721–P730 are Extracellular-facing. A helical transmembrane segment spans residues F731–L751. The Cytoplasmic segment spans residues S752 to S759. The helical transmembrane segment at L760–F780 threads the bilayer. The Extracellular portion of the chain corresponds to A781–S835. The chain crosses the membrane as a helical span at residues F836 to Y856. Residues L857 to Q1374 are Cytoplasmic-facing. At T901 the chain carries Phosphothreonine. The 232-residue stretch at V929–V1160 folds into the ABC transporter 1 domain. ATP is bound by residues F938, G966, and K969. T970 is a Mg(2+) binding site. Residues T971, Q1010, K1054, G1064, G1065, and H1118 each contribute to the ATP site. S1185 bears the Phosphoserine mark. Residues E1295–S1340 are disordered. Residues A1310 to S1319 are compositionally biased toward polar residues. A Phosphothreonine modification is found at T1313. Phosphoserine is present on residues S1317 and S1319. Residues I1375–F1395 form a helical membrane-spanning segment. The Extracellular segment spans residues G1396 to V1679. N1455 carries N-linked (Hex...) asparagine glycosylation. Residue N1527 is glycosylated (N-linked (Hex...) asparagine). N-linked (GlcNAc...) asparagine glycosylation occurs at N1586. The N-linked (Hex...) asparagine glycan is linked to N1660. The helical transmembrane segment at V1680–I1700 threads the bilayer. Residues Q1701–N1725 lie on the Cytoplasmic side of the membrane. A helical membrane pass occupies residues F1726–G1746. Residues F1747–N1757 lie on the Extracellular side of the membrane. A helical transmembrane segment spans residues L1758–P1778. Over A1779–Y1790 the chain is Cytoplasmic. A helical transmembrane segment spans residues V1791–L1811. At E1812–K1829 the chain is on the extracellular side. Residue N1817 is glycosylated (N-linked (GlcNAc...) asparagine). The helical transmembrane segment at L1830–Q1850 threads the bilayer. At A1851–A1879 the chain is on the cytoplasmic side. Residues M1880–F1900 form a helical membrane-spanning segment. Over S1901 to G2281 the chain is Extracellular. An N-linked (GlcNAc...) asparagine glycan is attached at N1931. One can recognise an ABC transporter 2 domain in the interval L1936 to K2168. Residues N1972, G1973, K1976, T1977, and T1978 each coordinate ATP. T1977 contributes to the Mg(2+) binding site. Residues N2004 and N2050 are each glycosylated (N-linked (GlcNAc...) asparagine). Residue G2071 coordinates ATP. The segment at V2242–A2247 is essential for ATP binding and ATPase activity. Residue N2251 is glycosylated (N-linked (GlcNAc...) asparagine). The disordered stretch occupies residues A2262–G2281.

In terms of processing, N-glycosylated. Post-translationally, proteolytic cleavage by trypsin leads to a 120-kDa N-terminal fragment and a 115-kDa C-terminal fragment that are linked through disulfide bonds. Phosphorylation is independent of light exposure and modulates ATPase activity. As to expression, expressed in retina namely in the periphery and incisures of the rod outer segments (ROS).

It localises to the membrane. Its subcellular location is the cell projection. The protein localises to the cilium. It is found in the photoreceptor outer segment. The protein resides in the cytoplasmic vesicle. It localises to the endoplasmic reticulum. The catalysed reaction is ATP + H2O + phospholipidSide 1 = ADP + phosphate + phospholipidSide 2.. The enzyme catalyses an N-all-trans-retinylidenephosphatidylethanolamine(out) + ATP + H2O = an N-all-trans-retinylidenephosphatidylethanolamine(in) + ADP + phosphate + H(+). It carries out the reaction a 1,2-diacyl-sn-glycero-3-phosphoethanolamine(out) + ATP + H2O = a 1,2-diacyl-sn-glycero-3-phosphoethanolamine(in) + ADP + phosphate + H(+). It catalyses the reaction N-11-cis-retinylidenephosphatidylethanolamine(out) + ATP + H2O = N-11-cis-retinylidenephosphatidylethanolamine(in) + ADP + phosphate + H(+). The catalysed reaction is ATP + H2O = ADP + phosphate + H(+). Its activity is regulated as follows. All-trans-retinal transport activity is reduced by EDTA chelation of Mg2+. All-trans-retinal transport activity is inhibited by N-ethylmaleimide (NEM). Phosphatidylethanolamine transport is strongly inhibited by beryllium fluoride and NEM. Flippase that catalyzes in an ATP-dependent manner the transport of retinal-phosphatidylethanolamine conjugates like the 11-cis and all-trans isomers of N-retinylidene-phosphatidylethanolamine from the lumen to the cytoplasmic leaflet of photoreceptor outer segment disk membranes, where N-cis-retinylidene-phosphatidylethanolamine (N-cis-R-PE) is then isomerized to its all-trans isomer (N-trans-R-PE) and reduced by RDH8 to produce all-trans-retinol (all-trans-rol) and therefore prevents the accumulation of excess of 11-cis-retinal and its schiff-base conjugate and the formation of toxic bisretinoid. Displays both ATPase and GTPase activity that is strongly influenced by the lipid environment and the presence of retinoid compounds. Binds the unprotonated form of N-retinylidene-phosphatidylethanolamine with high affinity in the absence of ATP and ATP binding and hydrolysis induce a protein conformational change that causes the dissociation of N-retinylidene-phosphatidylethanolamine. The chain is Retinal-specific phospholipid-transporting ATPase ABCA4 from Bos taurus (Bovine).